We begin with the raw amino-acid sequence, 105 residues long: Heat shock protein HspQ (105 aa).

It belongs to the HspQ family.

The protein localises to the cytoplasm. Functionally, involved in the degradation of certain denaturated proteins, including DnaA, during heat shock stress. This Baumannia cicadellinicola subsp. Homalodisca coagulata protein is Heat shock protein HspQ.